The primary structure comprises 285 residues: MKYIGAHVSAAGGLANAPARAAEIGATAFALFTKNQRQWRAAPLTPQVIDDFKIACEKYLFSAAQILPHDSYLINLGHPVSEALEKSRDAFLDEMQRCEQLGLTLLNFHPGSHLMQIAQEDCLARIAESINIALAQTEGVTAVIENTAGQGSNLGFEFEQLAAIIDGVEDKSRVGVCIDTCHAFAAGYDLRTPEACEKTFAEFGKIVGFQYLRGMHLNDAKSAFGSRVDRHHSLGEGNIGHDAFRWIMQDGRFDGIPLILETINPDIWAEEIAWLKAQQIAEAVA.

The Zn(2+) site is built by His69, His109, Glu145, Asp179, His182, His216, Asp229, His231, and Glu261.

It belongs to the AP endonuclease 2 family. Requires Zn(2+) as cofactor.

The enzyme catalyses Endonucleolytic cleavage to 5'-phosphooligonucleotide end-products.. In terms of biological role, endonuclease IV plays a role in DNA repair. It cleaves phosphodiester bonds at apurinic or apyrimidinic (AP) sites, generating a 3'-hydroxyl group and a 5'-terminal sugar phosphate. The polypeptide is Probable endonuclease 4 (Salmonella newport (strain SL254)).